The chain runs to 189 residues: Pyridoxal 5'-phosphate synthase subunit PdxT (189 aa).

47–49 (GES) contacts L-glutamine. The active-site Nucleophile is the Cys-79. L-glutamine contacts are provided by residues Arg-106 and 135-136 (IR). Residues His-171 and Glu-173 each act as charge relay system in the active site.

It belongs to the glutaminase PdxT/SNO family. In terms of assembly, in the presence of PdxS, forms a dodecamer of heterodimers. Only shows activity in the heterodimer.

It catalyses the reaction aldehydo-D-ribose 5-phosphate + D-glyceraldehyde 3-phosphate + L-glutamine = pyridoxal 5'-phosphate + L-glutamate + phosphate + 3 H2O + H(+). The catalysed reaction is L-glutamine + H2O = L-glutamate + NH4(+). It functions in the pathway cofactor biosynthesis; pyridoxal 5'-phosphate biosynthesis. Functionally, catalyzes the hydrolysis of glutamine to glutamate and ammonia as part of the biosynthesis of pyridoxal 5'-phosphate. The resulting ammonia molecule is channeled to the active site of PdxS. The sequence is that of Pyridoxal 5'-phosphate synthase subunit PdxT from Thermoanaerobacter pseudethanolicus (strain ATCC 33223 / 39E) (Clostridium thermohydrosulfuricum).